Consider the following 183-residue polypeptide: uncharacterized protein (183 aa).

Residues 7-23 (LFFTALCFGLTGCIAPP) traverse the membrane as a helical segment.

The protein localises to the membrane. This is an uncharacterized protein from Haemophilus influenzae (strain ATCC 51907 / DSM 11121 / KW20 / Rd).